Reading from the N-terminus, the 360-residue chain is 3-isopropylmalate dehydrogenase (360 aa).

Residue 76-89 (GPKWDKIERDIRPE) coordinates NAD(+). Residues Arg96, Arg106, Arg134, and Asp224 each coordinate substrate. Asp224, Asp248, and Asp252 together coordinate Mg(2+). 282 to 294 (GSAPDIAGQGIAN) contacts NAD(+).

Belongs to the isocitrate and isopropylmalate dehydrogenases family. LeuB type 1 subfamily. As to quaternary structure, homodimer. Mg(2+) is required as a cofactor. Requires Mn(2+) as cofactor.

The protein localises to the cytoplasm. It catalyses the reaction (2R,3S)-3-isopropylmalate + NAD(+) = 4-methyl-2-oxopentanoate + CO2 + NADH. It functions in the pathway amino-acid biosynthesis; L-leucine biosynthesis; L-leucine from 3-methyl-2-oxobutanoate: step 3/4. Catalyzes the oxidation of 3-carboxy-2-hydroxy-4-methylpentanoate (3-isopropylmalate) to 3-carboxy-4-methyl-2-oxopentanoate. The product decarboxylates to 4-methyl-2 oxopentanoate. The polypeptide is 3-isopropylmalate dehydrogenase (Pseudomonas fluorescens (strain ATCC BAA-477 / NRRL B-23932 / Pf-5)).